Consider the following 471-residue polypeptide: Mitochondrial distribution and morphology protein 10 (471 aa).

The interval 429-455 (PSSFSSPSRAANSTPAGGGQSVGGGIS) is disordered. The segment covering 444–455 (AGGGQSVGGGIS) has biased composition (gly residues).

Belongs to the MDM10 family. Component of the ER-mitochondria encounter structure (ERMES) or MDM complex, composed of mmm1, mdm10, mdm12 and mdm34. Associates with the mitochondrial outer membrane sorting assembly machinery SAM(core) complex.

The protein localises to the mitochondrion outer membrane. Its function is as follows. Component of the ERMES/MDM complex, which serves as a molecular tether to connect the endoplasmic reticulum and mitochondria. Components of this complex are involved in the control of mitochondrial shape and protein biogenesis and may function in phospholipid exchange. mdm10 is involved in the late assembly steps of the general translocase of the mitochondrial outer membrane (TOM complex). Functions in the tom40-specific route of the assembly of outer membrane beta-barrel proteins, including the association of tom40 with the receptor tom22 and small TOM proteins. Can associate with the SAM(core) complex as well as the mdm12-mmm1 complex, both involved in late steps of the major beta-barrel assembly pathway, that is responsible for biogenesis of all outer membrane beta-barrel proteins. May act as a switch that shuttles between both complexes and channels precursor proteins into the tom40-specific pathway. Plays a role in mitochondrial morphology and in the inheritance of mitochondria. This is Mitochondrial distribution and morphology protein 10 (mdmB) from Aspergillus fumigatus (strain ATCC MYA-4609 / CBS 101355 / FGSC A1100 / Af293) (Neosartorya fumigata).